The sequence spans 391 residues: Metal tolerance protein 7 (391 aa).

Residues Met1 to Thr21 are disordered. Topologically, residues Met1 to Leu103 are cytoplasmic. The helical transmembrane segment at Ala104–Val124 threads the bilayer. Residues Glu125–Ser134 are Vacuolar-facing. Residues Thr135–Met155 traverse the membrane as a helical segment. At Lys156–Gln171 the chain is on the cytoplasmic side. The chain crosses the membrane as a helical span at residues Pro172 to Glu192. At Ser193–Glu210 the chain is on the vacuolar side. The helical transmembrane segment at Leu211–Cys231 threads the bilayer. At Arg232–His246 the chain is on the cytoplasmic side. A helical transmembrane segment spans residues Phe247–Val264. The Vacuolar portion of the chain corresponds to Arg265–Tyr266. Residues Lys267–Ala287 form a helical membrane-spanning segment. The Cytoplasmic segment spans residues Arg288–Val391.

It belongs to the cation diffusion facilitator (CDF) transporter (TC 2.A.4) family. SLC30A subfamily.

The protein localises to the vacuole membrane. In terms of biological role, involved in sequestration of excess metal in the cytoplasm into vacuoles to maintain metal homeostasis. This Oryza sativa subsp. japonica (Rice) protein is Metal tolerance protein 7 (MTP7).